The primary structure comprises 721 residues: MSEYTNEHFNNRELSWLDFNERVLEEAMDERNPLMERLKFLAIFSSNLDEFYMVRVGGLKDEVLAGFNRPEDKTGLTPKQQIKSISMRAQELVETQYATYKKITKQLSNQHVRFLRTKHLNKTQQDFVKEYFRTHVFPVLTPIAVDAYRPFPMLLSKSLNIAVEIASNGEGKKRLALVQVPSVLPRYLELPTDDEEHTDLILLEDLIIQFIDSLFKGFVVESTMPFRITRNADMPFHEEGSRDVLKQIEKELKKRRYGVAIRLEVQQRSLRKELLFMLQDVLDLHDRDIFIVDGPIDLTFLFGIYNQIGMEYDDMINETLIPFIPEGLESGKDLFQSIAKQDYLLHHPYHSFDPIVRFIVQAAKDPNVLAIKQTLYRVSGDSPIIKALTDAAESGKQVTVLVELKARFDEEKNIQWAKQLEKAGAHVIYGYKELKTHSKITLVVRILEGGVLQRFIHLGTGNYNDSTAKLYTDIGLLTTNEELAEDATNFFNWLSGYGERPSWHQFETSPDDMKDFFLNKIDDEIKLHEKYGNGRIVAKMNSITDRAIITKLYDASSAGVKIDLIVRGICCLRPGIKGVSENIKVISIIDRYLEHSRIFYFYQNGKEDLYCSSADWMTRNMKKRIEILFPILNASHKTYIKDMMALQLVDNVKARRQRSDGRYVYVKRETNEEEIQSQIIIHQYTGGRWNNIPSVFEREPSNWAEREVLRLRAENEKMTDD.

Asparagine 47 is an ATP binding site. Residues arginine 377 and arginine 407 each contribute to the Mg(2+) site. Residue histidine 437 is the Phosphohistidine intermediate of the active site. ATP contacts are provided by tyrosine 471, arginine 567, and histidine 595.

The protein belongs to the polyphosphate kinase 1 (PPK1) family. The cofactor is Mg(2+). In terms of processing, an intermediate of this reaction is the autophosphorylated ppk in which a phosphate is covalently linked to a histidine residue through a N-P bond.

It carries out the reaction [phosphate](n) + ATP = [phosphate](n+1) + ADP. Catalyzes the reversible transfer of the terminal phosphate of ATP to form a long-chain polyphosphate (polyP). In Exiguobacterium sp. (strain ATCC BAA-1283 / AT1b), this protein is Polyphosphate kinase.